We begin with the raw amino-acid sequence, 172 residues long: Putative phosphoesterase BCAH820_1309 (172 aa).

Catalysis depends on histidine 34, which acts as the Proton donor. 2 short sequence motifs (HXTX) span residues 34-37 (HITL) and 115-118 (HLTI). Histidine 115 serves as the catalytic Proton acceptor.

The protein belongs to the 2H phosphoesterase superfamily. YjcG family.

This Bacillus cereus (strain AH820) protein is Putative phosphoesterase BCAH820_1309.